The sequence spans 191 residues: Thymidine kinase (191 aa).

ATP-binding positions include 9–16 and 85–88; these read GSMNSGKT and DESQ. E86 acts as the Proton acceptor in catalysis. Zn(2+)-binding residues include C143, C146, C181, and C184.

This sequence belongs to the thymidine kinase family. As to quaternary structure, homotetramer.

It is found in the cytoplasm. It catalyses the reaction thymidine + ATP = dTMP + ADP + H(+). This chain is Thymidine kinase, found in Listeria monocytogenes serovar 1/2a (strain ATCC BAA-679 / EGD-e).